The chain runs to 922 residues: Alpha-actinin, sarcomeric (922 aa).

The actin-binding stretch occupies residues 1 to 252 (MMENGGYVGQ…IMTYVSCYYH (252 aa)). Calponin-homology (CH) domains lie at 36–140 (KQQK…LRFA) and 149–255 (MTAK…HAFQ). Spectrin repeat units follow at residues 253–393 (AFQG…MVSD), 394–508 (ITNS…RCQR), 509–629 (ICDQ…SADL), and 630–742 (ISRK…TMET). EF-hand domains are found at residues 776–811 (EQLT…LGYS) and 817–852 (QGDM…ESTD). 5 residues coordinate Ca(2+): D789, N791, T793, R795, and E800.

The protein belongs to the alpha-actinin family. In terms of assembly, homodimer; antiparallel.

Functionally, F-actin cross-linking protein which is thought to anchor actin to a variety of intracellular structures. This is a bundling protein. The protein is Alpha-actinin, sarcomeric (Actn) of Anopheles gambiae (African malaria mosquito).